The chain runs to 230 residues: Large ribosomal subunit protein uL1 (230 aa).

The protein belongs to the universal ribosomal protein uL1 family. As to quaternary structure, part of the 50S ribosomal subunit.

Binds directly to 23S rRNA. The L1 stalk is quite mobile in the ribosome, and is involved in E site tRNA release. In terms of biological role, protein L1 is also a translational repressor protein, it controls the translation of the L11 operon by binding to its mRNA. In Leptospira interrogans serogroup Icterohaemorrhagiae serovar copenhageni (strain Fiocruz L1-130), this protein is Large ribosomal subunit protein uL1.